The sequence spans 428 residues: Serine--tRNA ligase (428 aa).

Residue 235 to 237 participates in L-serine binding; that stretch reads TAE. ATP is bound at residue 266 to 268; sequence RSE. Glutamate 289 is an L-serine binding site. Position 353–356 (353–356) interacts with ATP; that stretch reads EISS. Serine 389 contacts L-serine.

It belongs to the class-II aminoacyl-tRNA synthetase family. Type-1 seryl-tRNA synthetase subfamily. As to quaternary structure, homodimer. The tRNA molecule binds across the dimer.

Its subcellular location is the cytoplasm. The enzyme catalyses tRNA(Ser) + L-serine + ATP = L-seryl-tRNA(Ser) + AMP + diphosphate + H(+). The catalysed reaction is tRNA(Sec) + L-serine + ATP = L-seryl-tRNA(Sec) + AMP + diphosphate + H(+). Its pathway is aminoacyl-tRNA biosynthesis; selenocysteinyl-tRNA(Sec) biosynthesis; L-seryl-tRNA(Sec) from L-serine and tRNA(Sec): step 1/1. Functionally, catalyzes the attachment of serine to tRNA(Ser). Is also able to aminoacylate tRNA(Sec) with serine, to form the misacylated tRNA L-seryl-tRNA(Sec), which will be further converted into selenocysteinyl-tRNA(Sec). This Shewanella piezotolerans (strain WP3 / JCM 13877) protein is Serine--tRNA ligase.